Reading from the N-terminus, the 95-residue chain is Large ribosomal subunit protein eL43 (95 aa).

Residues 38–59 form a C4-type zinc finger; sequence CPDCGSEAVSREGTGIWQCGKC.

The protein belongs to the eukaryotic ribosomal protein eL43 family. It depends on Zn(2+) as a cofactor.

This chain is Large ribosomal subunit protein eL43, found in Halobacterium salinarum (strain ATCC 29341 / DSM 671 / R1).